We begin with the raw amino-acid sequence, 269 residues long: Formamidopyrimidine-DNA glycosylase (269 aa).

The active-site Schiff-base intermediate with DNA is Pro2. Glu3 serves as the catalytic Proton donor. Residue Lys57 is the Proton donor; for beta-elimination activity of the active site. DNA is bound by residues His90, Arg109, and Arg150. The FPG-type zinc finger occupies 235–269; the sequence is NVYGRKGEPCEACGKAIESKVIGQRNTFFCTRCQR. Residue Arg259 is the Proton donor; for delta-elimination activity of the active site.

It belongs to the FPG family. As to quaternary structure, monomer. Requires Zn(2+) as cofactor.

The catalysed reaction is Hydrolysis of DNA containing ring-opened 7-methylguanine residues, releasing 2,6-diamino-4-hydroxy-5-(N-methyl)formamidopyrimidine.. It catalyses the reaction 2'-deoxyribonucleotide-(2'-deoxyribose 5'-phosphate)-2'-deoxyribonucleotide-DNA = a 3'-end 2'-deoxyribonucleotide-(2,3-dehydro-2,3-deoxyribose 5'-phosphate)-DNA + a 5'-end 5'-phospho-2'-deoxyribonucleoside-DNA + H(+). Functionally, involved in base excision repair of DNA damaged by oxidation or by mutagenic agents. Acts as a DNA glycosylase that recognizes and removes damaged bases. Has a preference for oxidized purines, such as 7,8-dihydro-8-oxoguanine (8-oxoG). Has AP (apurinic/apyrimidinic) lyase activity and introduces nicks in the DNA strand. Cleaves the DNA backbone by beta-delta elimination to generate a single-strand break at the site of the removed base with both 3'- and 5'-phosphates. This Alteromonas mediterranea (strain DSM 17117 / CIP 110805 / LMG 28347 / Deep ecotype) protein is Formamidopyrimidine-DNA glycosylase.